Here is a 604-residue protein sequence, read N- to C-terminus: Putative JmjC domain-containing protein L887 (604 aa).

In terms of domain architecture, JmjC spans 1–127 (MNNMKKIIII…PNNKLNLIQP (127 aa)). Residues 4 to 24 (MKKIIIISIIIIIIIVLLFYI) form a helical membrane-spanning segment.

It is found in the membrane. This Acanthamoeba polyphaga (Amoeba) protein is Putative JmjC domain-containing protein L887.